The sequence spans 426 residues: Chordin-like protein 2 (426 aa).

The signal sequence occupies residues 1-25 (MVPGVRIIPSLLGLVMFWLPLDSQA). 2 VWFC domains span residues 31-96 (KVCL…PRCV) and 109-175 (KSCQ…QTCK). Asparagine 114 is a glycosylation site (N-linked (GlcNAc...) asparagine). Serine 182 bears the Phosphoserine mark. The span at 182-191 (STEENLTQLQ) shows a compositional bias: polar residues. The tract at residues 182 to 216 (STEENLTQLQHGERHSQDPCSERRGPSTPAPTSLS) is disordered. Asparagine 186 is a glycosylation site (N-linked (GlcNAc...) asparagine). Basic and acidic residues predominate over residues 192-206 (HGERHSQDPCSERRG). Residues 207-216 (PSTPAPTSLS) show a composition bias toward low complexity. The VWFC 3 domain occupies 246–311 (KACTHNGKTY…VAGKCCKICP (66 aa)).

In terms of assembly, interacts with GDF5. May interact with INHBA, BMP2, BMP4, BMP5, BMP6, and BMP7. In terms of tissue distribution, weakly expressed in the liver and kidney. In reproductive organs expressed in connective tissues such as ligaments of the ovary and oviduct in females, and of testis, epididymis and certain male accessory sex glands in males. Expression was high in uterine myometrium. Weakly expressed in cartilage of the femoral head, patella, articular facets of vertebrae, in the annulus fibrosus of intervertebral disks. In normal cartilage, expression was confined to articular chondrocytes especially in the superficial zone.

It localises to the secreted. Its function is as follows. Implicated in tumor angiogenesis. May inhibits BMPs activity by blocking their interaction with their receptors. Has a negative regulator effect on the cartilage formation/regeneration from immature mesenchymal cells, by preventing or reducing the rate of matrix accumulation. May play a role during myoblast and osteoblast differentiation, and maturation. This Mus musculus (Mouse) protein is Chordin-like protein 2 (Chrdl2).